We begin with the raw amino-acid sequence, 358 residues long: Insulin gene enhancer protein isl-2b (358 aa).

LIM zinc-binding domains follow at residues 27–80 (CVGC…CKRD) and 89–143 (CAKC…RADH). Positions 191 to 250 (TTRVRTVLNEKQLHTLRTCYNANPRPDALMKEQLVEMTGLSPRVIRVWFQNKRCKDKKRS) form a DNA-binding region, homeobox. A compositionally biased stretch (low complexity) spans 325 to 335 (ESGSLGNSSGS). The interval 325 to 358 (ESGSLGNSSGSDVTSLSSQLPDTPNSMVPSPVET) is disordered. Over residues 336-358 (DVTSLSSQLPDTPNSMVPSPVET) the composition is skewed to polar residues.

The protein resides in the nucleus. Binds to one of the cis-acting domain of the insulin gene enhancer. May be involved in the regional specification of the myotome and also in target recognition by the caudal primary neuron. The sequence is that of Insulin gene enhancer protein isl-2b (isl2b) from Danio rerio (Zebrafish).